The primary structure comprises 77 residues: UPF0291 protein YnzC (77 aa).

Residues 56–77 form a disordered region; it reads DPEGNDVTPEKLKREQRNNKLH. Basic and acidic residues predominate over residues 63–77; sequence TPEKLKREQRNNKLH.

It belongs to the UPF0291 family.

The protein resides in the cytoplasm. The chain is UPF0291 protein YnzC (ynzC) from Bacillus subtilis (strain 168).